We begin with the raw amino-acid sequence, 226 residues long: 2-amino-5-formylamino-6-ribosylaminopyrimidin-4(3H)-one 5'-monophosphate deformylase (226 aa).

Residues E29, H31, D40, and H108 each coordinate Fe cation.

The protein belongs to the creatininase superfamily. FAPy deformylase family. Homodimer. Fe(2+) serves as cofactor. It depends on Zn(2+) as a cofactor.

It carries out the reaction 2-amino-5-formylamino-6-(5-phospho-D-ribosylamino)pyrimidin-4(3H)-one + H2O = 2,5-diamino-6-(1-D-ribosylamino)pyrimidin-4(3H)-one 5'-phosphate + formate + H(+). It functions in the pathway cofactor biosynthesis; coenzyme F420 biosynthesis. Its pathway is cofactor biosynthesis; riboflavin biosynthesis. In terms of biological role, catalyzes the hydrolysis of the formamide of 2-amino-5-formylamino-6-ribosylamino-4(3H)-pyrimidinone 5'-monophosphate (FAPy) to form 2,5-diamino-6-ribosylamino-4(3H)-pyrimidinone 5'-phosphate (APy). The sequence is that of 2-amino-5-formylamino-6-ribosylaminopyrimidin-4(3H)-one 5'-monophosphate deformylase from Methanocaldococcus vulcanius (strain ATCC 700851 / DSM 12094 / M7) (Methanococcus vulcanius).